A 532-amino-acid polypeptide reads, in one-letter code: Muscarinic acetylcholine receptor M5 (532 aa).

Residues 1-29 (MEGESYHNETTVNGTPVNHQALERHGLWE) lie on the Extracellular side of the membrane. N8 carries an N-linked (GlcNAc...) asparagine glycan. The helical transmembrane segment at 30-53 (VITIAAVTAVVSLMTIVGNVLVMI) threads the bilayer. Topologically, residues 54–66 (SFKVNSQLKTVNN) are cytoplasmic. Residues 67–87 (YYLLSLACADLIIGIFSMNLY) form a helical membrane-spanning segment. The Extracellular segment spans residues 88-104 (TTYILMGRWVLGSLACD). C103 and C183 form a disulfide bridge. A helical transmembrane segment spans residues 105-126 (LWLALDYVASNASVMNLLVISF). The Cytoplasmic portion of the chain corresponds to 127–146 (DRYFSITRPLTYRAKRTPKR). Residues 147 to 169 (AGIMIGLAWLVSFILWAPAILCW) traverse the membrane as a helical segment. Topologically, residues 170 to 191 (QYLVGKRTVPPDECQIQFLSEP) are extracellular. The helical transmembrane segment at 192-214 (TITFGTAIAAFYIPVSVMTILYC) threads the bilayer. At 215 to 443 (RIYRETEKRT…LVKERKAAQT (229 aa)) the chain is on the cytoplasmic side. Residues 265-290 (VRNQASWSSSRRSTSTTGKPTQATDL) form a disordered region. Over residues 270-281 (SWSSSRRSTSTT) the composition is skewed to low complexity. The helical transmembrane segment at 444–464 (LSAILLAFIITWTPYNIMVLV) threads the bilayer. Topologically, residues 465–478 (STFCDKCVPVTLWH) are extracellular. The helical transmembrane segment at 479-498 (LGYWLCYVNSTINPICYALC) threads the bilayer. Residues 499-532 (NRTFRKTFKLLLLCRWKKKKVEEKLYWQGNSKLP) lie on the Cytoplasmic side of the membrane. T501 and T505 each carry phosphothreonine.

The protein belongs to the G-protein coupled receptor 1 family. Muscarinic acetylcholine receptor subfamily. CHRM5 sub-subfamily.

The protein localises to the cell membrane. Its subcellular location is the postsynaptic cell membrane. In terms of biological role, the muscarinic acetylcholine receptor mediates various cellular responses, including inhibition of adenylate cyclase, breakdown of phosphoinositides and modulation of potassium channels through the action of G proteins. Primary transducing effect is Pi turnover. The chain is Muscarinic acetylcholine receptor M5 (Chrm5) from Mus musculus (Mouse).